Here is a 511-residue protein sequence, read N- to C-terminus: Synaptotagmin-6 (511 aa).

The Vesicular portion of the chain corresponds to 1-59; that stretch reads MSGVWGAGGPRCQAALAVLASLCRARPPPLGLDVETCQSFELQPPEQSPSAADSGTSVS. Positions 12–38 are cysteine motif; that stretch reads CQAALAVLASLCRARPPPLGLDVETCQ. Residues 60-80 form a helical membrane-spanning segment; sequence LLAVVVIVCGVALVAVFFFLF. The Cytoplasmic portion of the chain corresponds to 81–511; that stretch reads WKLCWMPWRN…KSFKEGTPRL (431 aa). Low complexity predominate over residues 93 to 103; that stretch reads ASSPSSANPAS. Disordered stretches follow at residues 93-118 and 157-182; these read ASSP…MADK and TKLQ…LPRQ. Residues 160–172 are compositionally biased toward polar residues; sequence QRQTTEPASSTRH. S217 carries the phosphoserine modification. 2 C2 domains span residues 230–351 and 362–495; these read SCGK…SIWK and DLGE…AHWH. Ca(2+)-binding residues include D261, D267, D319, F320, D321, S324, D327, D393, D399, D453, and D455. The interval 483–511 is necessary for cell membrane association (isoform 2); sequence MLAYPRKPIAHWHCLAEVKKSFKEGTPRL.

This sequence belongs to the synaptotagmin family. In terms of assembly, isoform 1: Homodimer; disulfide-linked via the cysteine motif. Isoform 1: Can also form heterodimers with SYT3, SYT7, SYT9 and SYT10. Isoform 1: Interacts with STX1A, STX1B and STX2; the interaction is Ca(2+)-dependent. Isoform 2: Is not able to form homodimer and heterodimers. The cofactor is Ca(2+).

The protein resides in the cytoplasmic vesicle. It is found in the secretory vesicle. It localises to the synaptic vesicle membrane. The protein localises to the membrane. Its subcellular location is the cytoplasm. The protein resides in the cytosol. It is found in the cell membrane. Functionally, may be involved in Ca(2+)-dependent exocytosis of secretory vesicles through Ca(2+) and phospholipid binding to the C2 domain or may serve as Ca(2+) sensors in the process of vesicular trafficking and exocytosis. May mediate Ca(2+)-regulation of exocytosis in acrosomal reaction in sperm. This is Synaptotagmin-6 (Syt6) from Rattus norvegicus (Rat).